The sequence spans 69 residues: Conotoxin Lt5.10 (69 aa).

An N-terminal signal peptide occupies residues 1 to 19; it reads MLCLPVFIILLLLASPAAP. Positions 20–54 are excised as a propeptide; sequence KSLETRIQNDLIRAGLTDADLKTEKGFLSGLLNVA.

The protein belongs to the conotoxin T superfamily. Post-translationally, contains 2 disulfide bonds that can be either 'C1-C3, C2-C4' or 'C1-C4, C2-C3', since these disulfide connectivities have been observed for conotoxins with cysteine framework V (for examples, see AC P0DQQ7 and AC P81755). As to expression, expressed by the venom duct.

The protein localises to the secreted. This is Conotoxin Lt5.10 from Conus litteratus (Lettered cone).